We begin with the raw amino-acid sequence, 213 residues long: Orotate phosphoribosyltransferase (213 aa).

Lys26 provides a ligand contact to 5-phospho-alpha-D-ribose 1-diphosphate. Orotate is bound at residue 34-35; the sequence is FF. Residues 72–73, Arg99, Lys100, Lys103, His105, and 124–132 each bind 5-phospho-alpha-D-ribose 1-diphosphate; these read YK and DDVITAGTA. Thr128 and Arg156 together coordinate orotate.

Belongs to the purine/pyrimidine phosphoribosyltransferase family. PyrE subfamily. In terms of assembly, homodimer. The cofactor is Mg(2+).

The enzyme catalyses orotidine 5'-phosphate + diphosphate = orotate + 5-phospho-alpha-D-ribose 1-diphosphate. It participates in pyrimidine metabolism; UMP biosynthesis via de novo pathway; UMP from orotate: step 1/2. Catalyzes the transfer of a ribosyl phosphate group from 5-phosphoribose 1-diphosphate to orotate, leading to the formation of orotidine monophosphate (OMP). The protein is Orotate phosphoribosyltransferase of Salmonella paratyphi A (strain ATCC 9150 / SARB42).